A 780-amino-acid polypeptide reads, in one-letter code: Pendrin (780 aa).

At 1-87 (MAARDRRSEP…YRVKEWLLSD (87 aa)) the chain is on the cytoplasmic side. The helical transmembrane segment at 88-108 (IISGVSTGLVGTLQGMAYALL) threads the bilayer. Alanine 109 is a topological domain (extracellular). Residues 110-130 (AVPVQYGLYSAFFPILTYFVF) form a helical membrane-spanning segment. Residues 131 to 135 (GTSRH) lie on the Cytoplasmic side of the membrane. A helical transmembrane segment spans residues 136–156 (ISVGPFPVVSLMVGSVVLSMA). Topologically, residues 157–191 (PDDHFLVPSGNGSTLNTTTLDTGTRDAARVLLAST) are extracellular. The chain crosses the membrane as a helical span at residues 192–212 (LTLLVGIIQLVFGGLQIGFIV). The Cytoplasmic portion of the chain corresponds to 213–218 (RYLADP). A helical transmembrane segment spans residues 219–239 (LVGGFTTAAAFQVLVSQLKIV). Topologically, residues 240 to 263 (LNVSTKNYNGVLSIIYTLIEIFQN) are extracellular. The chain crosses the membrane as a helical span at residues 264–284 (IGDTNIADFIAGLLTIIVCMA). At 285–295 (VKELNDRFKHK) the chain is on the cytoplasmic side. A helical transmembrane segment spans residues 296-316 (IPVPIPIEVIVTIIATAISYG). Over 317 to 344 (ANLEANYNAGIVKSIPSGFLPPVLPSVG) the chain is Extracellular. A helical transmembrane segment spans residues 345-365 (LFSDMLAASFSIAVVAYAIAV). At 366-384 (SVGKVYATKHDYIIDGNQE) the chain is on the cytoplasmic side. A helical membrane pass occupies residues 385–405 (FIAFGISNVFSGFFSCFVATT). At 406 to 421 (ALSRTAVQESTGGKTQ) the chain is on the extracellular side. The chain crosses the membrane as a helical span at residues 422–442 (VAGLISAVIVMVAIVALGKLL). Topologically, residues 443-448 (EPLQKS) are cytoplasmic. Residues 449-469 (VLAAVVIANLKGMFMQVCDVP) form a helical membrane-spanning segment. Residues 470–486 (RLWKQNKTDAVIWVFTC) lie on the Extracellular side of the membrane. The helical transmembrane segment at 487–507 (IMSIILGLDLGLLAGLLFGLL) threads the bilayer. The Cytoplasmic portion of the chain corresponds to 508 to 780 (TVVLRVQFPS…QDEAMRRLAS (273 aa)). Positions 535–729 (HYKNLEEPEG…LTVHDAILYL (195 aa)) constitute an STAS domain.

This sequence belongs to the SLC26A/SulP transporter (TC 2.A.53) family. Highly expressed in the kidney (at protein level).

It is found in the cell membrane. The protein localises to the apical cell membrane. It catalyses the reaction chloride(in) = chloride(out). The catalysed reaction is iodide(out) = iodide(in). It carries out the reaction hydrogencarbonate(in) + chloride(out) = hydrogencarbonate(out) + chloride(in). The enzyme catalyses iodide(in) + hydrogencarbonate(out) = iodide(out) + hydrogencarbonate(in). It catalyses the reaction iodide(in) + chloride(out) = iodide(out) + chloride(in). The catalysed reaction is formate(in) + chloride(out) = formate(out) + chloride(in). Functionally, sodium-independent transporter of chloride and iodide. Mediates electroneutral chloride-bicarbonate and chloride-formate exchange with 1:1 stoichiometry. Mediates electroneutral iodide-chloride and iodide-bicarbonate exchange. The chain is Pendrin (Slc26a4) from Rattus norvegicus (Rat).